Consider the following 1059-residue polypeptide: Potassium transporter TRK1 (1059 aa).

The Cytoplasmic segment spans residues 1-46 (MLYRVSGFYKRHTRNFTNIDYGYYIRNFIHHIASKIYPYAKVVLPN). Residues 47–67 (FRAAHYFYILTLVILGSILVY) form a helical membrane-spanning segment. Residues 68–73 (PVKTCA) are Extracellular-facing. Residues 74-90 (YIDVLFFTAGASTQAGL) lie within the membrane without spanning it. Topologically, residues 91-99 (NTVNVNDLS) are extracellular. A helical membrane pass occupies residues 100-122 (LYQQIVLYLLATLATPIFIHGSL). The Cytoplasmic segment spans residues 123–625 (LFVRLYYFER…LGGIEYRAVK (503 aa)). 3 disordered regions span residues 180 to 276 (REAE…IDPE), 304 to 350 (IGSP…EDED), and 404 to 574 (PWTS…SIEN). A compositionally biased stretch (low complexity) spans 186–203 (SSSSPQSSSSQTSQPVST). Residues 236–245 (EKIHFEEPQR) are compositionally biased toward basic and acidic residues. Residues 335–344 (PATNSVGTGN) are compositionally biased toward polar residues. A compositionally biased stretch (low complexity) spans 412-423 (TLSNSSKKGSLS). Acidic residues-rich tracts occupy residues 428–449 (DTEDDSEDEEYASIDSETSDIS) and 469–490 (YEEDEDEDEHNSDDDDDDDDGE). Positions 524–536 (RSNTLDTPQQNTS) are enriched in polar residues. A compositionally biased stretch (basic residues) spans 540–552 (KIRKKAPKRKTPR). Positions 556–566 (NASFNQHSNVS) are enriched in polar residues. The helical transmembrane segment at 626-649 (LLIKIIVVYYVGFNIIPGVMLSIW) threads the bilayer. Residues 650–668 (IYCMPHYKNLMISSSISPA) lie on the Extracellular side of the membrane. The stretch at 669–685 (WWAFFTSQSSFNDLGLT) is an intramembrane region. Residues 686 to 696 (LTSNSMMSFNQ) are Extracellular-facing. The helical transmembrane segment at 697 to 713 (NAFVQILCSFLIVIGNT) threads the bilayer. At 714–757 (GFPILLRFIIWVMFKTARPLSLYKESLGFLLDHPRRCFTLLFPS) the chain is on the cytoplasmic side. The helical transmembrane segment at 758–781 (VPTWWLFFILVVLNGFDLVIFCIL) threads the bilayer. Over 782–796 (DLHDDTFKGVDMGYR) the chain is Extracellular. Residues 797 to 813 (VLNGLFQAFCTRTVGFS) lie within the membrane without spanning it. Residues 814 to 820 (VMDLSQL) lie on the Extracellular side of the membrane. A helical membrane pass occupies residues 821–844 (HAATQVSYLIMMYISVLPIAISVR). Residues 845–877 (RTNVYEEQSLGVYAKENAEGVDESAPSNYVGSH) lie on the Cytoplasmic side of the membrane. Residues 878 to 899 (LRNQLSYDLWYICLGLFIICIA) form a helical membrane-spanning segment. The Extracellular segment spans residues 900-912 (EGKRLKEQDLRFS). An intramembrane segment occupies 913-931 (IFAVLFEIVSAYGTVGMSM). Over 932–945 (GYPGVDCSLSGEFN) the chain is Extracellular. A helical membrane pass occupies residues 946 to 968 (VISKLVIIAMMIRGRHRGLPYTI). The Cytoplasmic segment spans residues 969-1059 (DRAIMLPNAA…RYVVRTVSEV (91 aa)).

The protein belongs to the TrkH potassium transport family.

It is found in the cell membrane. The enzyme catalyses K(+)(in) = K(+)(out). It carries out the reaction chloride(in) = chloride(out). Its activity is regulated as follows. TRK1-mediated chloride conductance is blocked by 4,4'-diisothiocyanatostilbene-2,2'-disulfonic acid. Functionally, potassium transporter that mediates K(+) influx, as well as Cl(-) efflux as a secondary function. TRK1 is the major K(+) uptake transporter that regulates membrane potential and intracellular pH. The TRK1-mediated Cl(-) efflux should serve as a Cl(-) detoxification route and may play a role in sustaining C.albicans on mammalian epithelial surfaces, or in physiological saline solutions such as saliva. In terms of biological role, mediates candidacidal activities of cysteine-free peptides, but not of defensins. The hallmark of salivary gland-secreted histatin-5 (Hst 5) killing of C.albicans is the rapid efflux of cellular ATP and other small nucleotides and ions from the cell as well as concurrent intracellular uptake of propidium iodide (PI). TRK1 is the channel for Hst 5-induced killing and histatin-5 may directly or indirectly alter TRK1 function, allowing the efflux of larger anions, including ATP, and the influx of small cationic dyes, such as PI. In Candida albicans (Yeast), this protein is Potassium transporter TRK1.